A 61-amino-acid polypeptide reads, in one-letter code: Weak toxin CM-2a (61 aa).

4 cysteine pairs are disulfide-bonded: Cys3–Cys19, Cys12–Cys37, Cys41–Cys49, and Cys50–Cys55.

The protein belongs to the three-finger toxin family. Short-chain subfamily. Orphan group XX sub-subfamily. As to expression, expressed by the venom gland.

It is found in the secreted. In Naja annulifera (Banded Egyptian cobra), this protein is Weak toxin CM-2a.